The chain runs to 534 residues: MRLITRWIPLANALASTMPVQVVASIENPSLLPTPPMGFNNWARFMCDLNETLFVETTDAMASNGLLEAGYNRINLDDCWMNYDRAENGSLEWNVTKFPRGLPWLGQYVKSKGFNFGIYEDSGNLTCGGYPGSEGYEEIDAETFAAWGIDYLKLDGCNVYPKEGRTLQEEYKYLYGNWHEILSKMQQPLIFSESAPAYFSMTDNLTDWHTVMDWVPEYGELARHSVDILVYSGEGSAWDSIMTNYKFNTLVARYQRPGYYNDPDFLIADHPGLSLDEKRSQFALWASFSAPLIISAHIPDLSSEDLEYLTNQALIAVDQDPLAQQATLASRDGSLDVLTRNLADGSRLVTILNHGSESIETDISLDILGLSTDCTYKAQDLWGGSTQTIKDAIRIKLNTHATAVYKIDTDEKCSQVIPTGLIFNTASGKCLTGTSSSVGSESCNGSKSQIWQIDASGVIRTLSEQSKCLTADGKAISLQECSENNGQKWSYAITGNLKNADTGYCLTNGGGVSACGFETNSQVFGLPAGVHVAL.

The first 25 residues, 1-25 (MRLITRWIPLANALASTMPVQVVAS), serve as a signal peptide directing secretion. Cys47 and Cys79 are oxidised to a cystine. N-linked (GlcNAc...) asparagine glycosylation is found at Asn50, Asn88, Asn94, and Asn124. Cys127 and Cys157 are joined by a disulfide. The Nucleophile role is filled by Asp155. The N-linked (GlcNAc...) asparagine glycan is linked to Asn204. Asp213 (proton donor) is an active-site residue. One can recognise a Ricin B-type lectin domain in the interval 413 to 534 (CSQVIPTGLI…GLPAGVHVAL (122 aa)). Cysteines 430 and 443 form a disulfide. A glycan (N-linked (GlcNAc...) asparagine) is linked at Asn444. Cys468 and Cys481 form a disulfide bridge.

This sequence belongs to the glycosyl hydrolase 27 family.

The protein localises to the secreted. The enzyme catalyses Hydrolysis of terminal, non-reducing alpha-D-galactose residues in alpha-D-galactosides, including galactose oligosaccharides, galactomannans and galactolipids.. Its function is as follows. Hydrolyzes a variety of simple alpha-D-galactoside as well as more complex molecules such as oligosaccharides and polysaccharides. The protein is Probable alpha-galactosidase A (aglA) of Aspergillus flavus (strain ATCC 200026 / FGSC A1120 / IAM 13836 / NRRL 3357 / JCM 12722 / SRRC 167).